Here is a 192-residue protein sequence, read N- to C-terminus: Glycerol-3-phosphate acyltransferase (192 aa).

The next 5 helical transmembrane spans lie at 4–24, 48–68, 74–94, 101–121, and 125–145; these read FAII…DVVI, LVLV…WVGY, YFEL…PIFF, GVAT…GSML, and LLIF…ALIL.

Belongs to the PlsY family. Probably interacts with PlsX.

It is found in the cell inner membrane. It carries out the reaction an acyl phosphate + sn-glycerol 3-phosphate = a 1-acyl-sn-glycero-3-phosphate + phosphate. It participates in lipid metabolism; phospholipid metabolism. Its function is as follows. Catalyzes the transfer of an acyl group from acyl-phosphate (acyl-PO(4)) to glycerol-3-phosphate (G3P) to form lysophosphatidic acid (LPA). This enzyme utilizes acyl-phosphate as fatty acyl donor, but not acyl-CoA or acyl-ACP. The sequence is that of Glycerol-3-phosphate acyltransferase from Histophilus somni (strain 129Pt) (Haemophilus somnus).